We begin with the raw amino-acid sequence, 376 residues long: Nucleoside diphosphate kinase homolog 7 (376 aa).

The 89-residue stretch at 3–91 (HSERFVFIAE…YTARQLGSRK (89 aa)) folds into the DM10 domain.

Belongs to the NDK family. Component of sperm flagellar doublet microtubules. Component of the gamma-tubulin ring complex. Undergoes autophosphorylation. As to expression, expressed in airway epithelial cells.

Its subcellular location is the cytoplasm. It localises to the cytoskeleton. The protein resides in the microtubule organizing center. It is found in the centrosome. The protein localises to the nucleus. Its subcellular location is the spindle. It localises to the cilium axoneme. The protein resides in the flagellum axoneme. It is found in the cell projection. The protein localises to the cilium. Possesses an intrinsic kinase activity. Displays 3'-5' exonuclease activity with a preference for single-stranded DNA. Does not seem to have nucleoside diphosphate kinase activity. Functional component of the gamma-tubulin ring complex, implicated in the regulation of the microtubule-nucleating activity of the gamma-tubulin ring complex in centrosomes, in a kinase activity-dependent manner. Part of the dynein-decorated doublet microtubules (DMTs) in cilia axoneme, which is required for motile cilia beating. The polypeptide is Nucleoside diphosphate kinase homolog 7 (Homo sapiens (Human)).